A 919-amino-acid polypeptide reads, in one-letter code: MFS-type transporter clz9 (919 aa).

Residues 1 to 11 are compositionally biased toward polar residues; it reads MAASTKPTTKL. The interval 1 to 33 is disordered; it reads MAASTKPTTKLSTEEDDVSRRDSESSADFMKSN. The chain crosses the membrane as a helical span at residues 69–89; it reads VVASFAAAISPFSTSTYYPVV. An N-linked (GlcNAc...) asparagine glycan is attached at Asn104. 3 helical membrane passes run 132–152, 192–212, and 222–242; these read PMFL…ALQN, LIYA…IGGL, and VFWF…IFFG. Residue Asn260 is glycosylated (N-linked (GlcNAc...) asparagine). The next 4 helical transmembrane spans lie at 303–323, 333–353, 393–413, and 418–438; these read FILS…TSVL, YDAV…LLAY, LGFV…YGWQ, and APLA…TGVM. Residue Asn461 is glycosylated (N-linked (GlcNAc...) asparagine). Residues 465–485 traverse the membrane as a helical segment; that stretch reads LLLGAGAVAVVGPLNKSAGIG. The 169-residue stretch at 641 to 809 folds into the DDE-1 domain; that stretch reads REWVTLIQGI…FTSANICSSF (169 aa). Positions 840 to 897 are disordered; the sequence is EAPWEAKTPSNRKKKQIQKRGTLTKGEGEDTLAQKEADQQIEREQRQGGEQSGRSRQA. Over residues 865–886 the composition is skewed to basic and acidic residues; it reads GEGEDTLAQKEADQQIEREQRQ. A compositionally biased stretch (low complexity) spans 887–896; the sequence is GGEQSGRSRQ. Residue Asn915 is glycosylated (N-linked (GlcNAc...) asparagine).

It belongs to the major facilitator superfamily. CAR1 family.

It is found in the membrane. Functionally, MFS-type transporter; part of the gene cluster that mediates the biosynthesis of squalestatin S1 (SQS1, also known as zaragozic acid A), a heavily oxidized fungal polyketide that offers potent cholesterol lowering activity by targeting squalene synthase (SS). In Cochliobolus lunatus (Filamentous fungus), this protein is MFS-type transporter clz9.